The chain runs to 337 residues: 1-aminocyclopropane-1-carboxylate deaminase (337 aa).

The residue at position 50 (Lys-50) is an N6-(pyridoxal phosphate)lysine. Ser-77 serves as the catalytic Nucleophile.

This sequence belongs to the ACC deaminase/D-cysteine desulfhydrase family. As to quaternary structure, homotrimer. Pyridoxal 5'-phosphate serves as cofactor.

It carries out the reaction 1-aminocyclopropane-1-carboxylate + H2O = 2-oxobutanoate + NH4(+). Its function is as follows. Catalyzes a cyclopropane ring-opening reaction, the irreversible conversion of 1-aminocyclopropane-1-carboxylate (ACC) to ammonia and alpha-ketobutyrate. Allows growth on ACC as a nitrogen source. This chain is 1-aminocyclopropane-1-carboxylate deaminase, found in Rhizobium radiobacter (Agrobacterium tumefaciens).